The sequence spans 255 residues: Acetylglutamate kinase (255 aa).

Substrate-binding positions include 40-41, R62, and N153; that span reads GG.

It belongs to the acetylglutamate kinase family. ArgB subfamily.

It localises to the cytoplasm. The enzyme catalyses N-acetyl-L-glutamate + ATP = N-acetyl-L-glutamyl 5-phosphate + ADP. It functions in the pathway amino-acid biosynthesis; L-arginine biosynthesis; N(2)-acetyl-L-ornithine from L-glutamate: step 2/4. Catalyzes the ATP-dependent phosphorylation of N-acetyl-L-glutamate. The protein is Acetylglutamate kinase of Bacillus cereus (strain AH187).